The chain runs to 331 residues: Adenosine deaminase (331 aa).

Zn(2+) contacts are provided by H12 and H14. Residues H14, D16, and G170 each contribute to the substrate site. A Zn(2+)-binding site is contributed by H197. E200 acts as the Proton donor in catalysis. Residue D278 participates in Zn(2+) binding. D279 lines the substrate pocket.

Belongs to the metallo-dependent hydrolases superfamily. Adenosine and AMP deaminases family. Adenosine deaminase subfamily. It depends on Zn(2+) as a cofactor.

It carries out the reaction adenosine + H2O + H(+) = inosine + NH4(+). The enzyme catalyses 2'-deoxyadenosine + H2O + H(+) = 2'-deoxyinosine + NH4(+). Catalyzes the hydrolytic deamination of adenosine and 2-deoxyadenosine. The protein is Adenosine deaminase of Shewanella sp. (strain W3-18-1).